A 61-amino-acid polypeptide reads, in one-letter code: Conotoxin Bt5.1 (61 aa).

An N-terminal signal peptide occupies residues Met1 to Ala22. A propeptide spanning residues Arg23 to Asn48 is cleaved from the precursor.

It belongs to the conotoxin T superfamily. Post-translationally, contains 2 disulfide bonds that can be either 'C1-C3, C2-C4' or 'C1-C4, C2-C3', since these disulfide connectivities have been observed for conotoxins with cysteine framework V (for examples, see AC P0DQQ7 and AC P81755). In terms of tissue distribution, expressed by the venom duct.

The protein resides in the secreted. This Conus betulinus (Beech cone) protein is Conotoxin Bt5.1.